A 340-amino-acid polypeptide reads, in one-letter code: Glyceraldehyde-3-phosphate dehydrogenase (340 aa).

NAD(+)-binding positions include 13-14 and glycine 112; that span reads TI. 141–143 lines the D-glyceraldehyde 3-phosphate pocket; the sequence is SCN. Catalysis depends on cysteine 142, which acts as the Nucleophile. Arginine 170 contacts NAD(+). 196–197 provides a ligand contact to D-glyceraldehyde 3-phosphate; sequence HG. Glutamine 302 serves as a coordination point for NAD(+).

The protein belongs to the glyceraldehyde-3-phosphate dehydrogenase family. As to quaternary structure, homotetramer.

Its subcellular location is the cytoplasm. The enzyme catalyses D-glyceraldehyde 3-phosphate + phosphate + NADP(+) = (2R)-3-phospho-glyceroyl phosphate + NADPH + H(+). It carries out the reaction D-glyceraldehyde 3-phosphate + phosphate + NAD(+) = (2R)-3-phospho-glyceroyl phosphate + NADH + H(+). It participates in carbohydrate degradation; glycolysis; pyruvate from D-glyceraldehyde 3-phosphate: step 1/5. The polypeptide is Glyceraldehyde-3-phosphate dehydrogenase (gap) (Archaeoglobus fulgidus (strain ATCC 49558 / DSM 4304 / JCM 9628 / NBRC 100126 / VC-16)).